A 99-amino-acid chain; its full sequence is UPF0213 protein SP_1535 (99 aa).

One can recognise a GIY-YIG domain in the interval 3-78 (HKAYMYVLEC…KRKKRPQKEE (76 aa)).

Belongs to the UPF0213 family.

This chain is UPF0213 protein SP_1535, found in Streptococcus pneumoniae serotype 4 (strain ATCC BAA-334 / TIGR4).